Here is a 395-residue protein sequence, read N- to C-terminus: Leucine aminopeptidase 1 (395 aa).

A signal peptide spans 1 to 19; it reads MKHLSLLALAAVAPTTALA. Residues 20–95 constitute a propeptide that is removed on maturation; sequence GVIDHQQVTF…SVKSFEQTKV (76 aa). Asn-187 is a glycosylation site (N-linked (GlcNAc...) asparagine). Residues His-195, Asp-214, Glu-253, and Asp-280 each coordinate Zn(2+). A disulfide bridge links Cys-329 with Cys-333. His-362 provides a ligand contact to Zn(2+).

The protein belongs to the peptidase M28 family. M28E subfamily. As to quaternary structure, monomer. Requires Zn(2+) as cofactor.

It localises to the secreted. Extracellular aminopeptidase that allows assimilation of proteinaceous substrates. The polypeptide is Leucine aminopeptidase 1 (LAP1) (Uncinocarpus reesii (strain UAMH 1704)).